Consider the following 340-residue polypeptide: Uroporphyrinogen decarboxylase (340 aa).

Substrate is bound by residues Arg-21–Arg-25, Asp-71, Tyr-148, Ser-203, and His-316.

The protein belongs to the uroporphyrinogen decarboxylase family. As to quaternary structure, homodimer.

Its subcellular location is the cytoplasm. The enzyme catalyses uroporphyrinogen III + 4 H(+) = coproporphyrinogen III + 4 CO2. The protein operates within porphyrin-containing compound metabolism; protoporphyrin-IX biosynthesis; coproporphyrinogen-III from 5-aminolevulinate: step 4/4. Functionally, catalyzes the decarboxylation of four acetate groups of uroporphyrinogen-III to yield coproporphyrinogen-III. The polypeptide is Uroporphyrinogen decarboxylase (Campylobacter concisus (strain 13826)).